The sequence spans 372 residues: L-selectin (372 aa).

Residues methionine 1–cysteine 28 form the signal peptide. A propeptide spanning residues aspartate 29–cysteine 38 is cleaved from the precursor. The Extracellular segment spans residues tryptophan 39–asparagine 332. Positions lysine 55–cysteine 155 constitute a C-type lectin domain. Intrachain disulfides connect cysteine 57-cysteine 155, cysteine 128-cysteine 147, cysteine 128-cysteine 160, cysteine 160-cysteine 171, cysteine 165-cysteine 180, cysteine 182-cysteine 191, cysteine 197-cysteine 241, cysteine 227-cysteine 254, cysteine 259-cysteine 303, and cysteine 289-cysteine 316. Asparagine 60 and asparagine 104 each carry an N-linked (GlcNAc...) asparagine glycan. Residues glutamate 118, asparagine 120, glutamate 126, asparagine 143, and aspartate 144 each contribute to the Ca(2+) site. One can recognise an EGF-like domain in the interval tyrosine 156–glutamine 192. Asparagine 177 carries an N-linked (GlcNAc...) asparagine glycan. Sushi domains lie at valine 195–valine 256 and valine 257–glutamate 318. Residues asparagine 216, asparagine 226, asparagine 246, asparagine 278, asparagine 288, asparagine 308, and asparagine 320 are each glycosylated (N-linked (GlcNAc...) asparagine). Residues proline 333–alanine 355 form a helical membrane-spanning segment. The Cytoplasmic portion of the chain corresponds to arginine 356–tyrosine 372.

This sequence belongs to the selectin/LECAM family. In terms of assembly, interaction with SELPLG/PSGL1 and PODXL2 is required for promoting recruitment and rolling of leukocytes. This interaction is dependent on the sialyl Lewis X glycan modification of SELPLG and PODXL2, and tyrosine sulfation modifications of SELPLG. Sulfation on 'Tyr-51' of SELPLG is important for L-selectin binding. Post-translationally, N-glycosylated. In terms of tissue distribution, predominantly expressed in lymphoid tissue.

Its subcellular location is the cell membrane. Its function is as follows. Calcium-dependent lectin that mediates cell adhesion by binding to glycoproteins on neighboring cells. Mediates the adherence of lymphocytes to endothelial cells of high endothelial venules in peripheral lymph nodes. Promotes initial tethering and rolling of leukocytes in endothelia. In Mus musculus (Mouse), this protein is L-selectin (Sell).